A 470-amino-acid chain; its full sequence is Uronate isomerase (470 aa).

The protein belongs to the metallo-dependent hydrolases superfamily. Uronate isomerase family.

The catalysed reaction is D-glucuronate = D-fructuronate. The enzyme catalyses aldehydo-D-galacturonate = keto-D-tagaturonate. It functions in the pathway carbohydrate metabolism; pentose and glucuronate interconversion. This Shigella boydii serotype 18 (strain CDC 3083-94 / BS512) protein is Uronate isomerase.